The sequence spans 435 residues: MGFLWRTRSNEKKITPVLSWPESEPESEITIPPEFQCPISIDLMKDPVIISTGITYDRVSIETWINSGNKTCPVTNTVLTTFDQIPNHTIRKMIQGWCVEKGSPLIQRIPTPRVPLMPCEVYEISRKLSSATRRGDYEKCGVIIEKIKKLGDESEKNRKCVNENSVGWVLCDCFDKFSGDEKLTFMLNEILSLLTWMFPIGLEGISKLASATSFRCVAGLLKSTDDSVRQNAAFIMKEILSLDETRVHSFAVENGVAEALVKLIRDSVSSSSTKSSLIAIYQMVLQKPEIASEFLEIGLVSITVEMIVDAENSVCEKALAVLDAICETEHGREEVRKNALVMPLLVKKIAKVSELATRSSMSMILKLWKTGNTVAVEDAVRLGAFQKVLLVLQVGYGEETKEKATELLKMMNTQMKLMSDCVDSLKEFKYIKKPF.

A U-box domain is found at T30–P104. ARM repeat units follow at residues L202–S241, T245–L285, P288–E327, and E329–K369.

The catalysed reaction is S-ubiquitinyl-[E2 ubiquitin-conjugating enzyme]-L-cysteine + [acceptor protein]-L-lysine = [E2 ubiquitin-conjugating enzyme]-L-cysteine + N(6)-ubiquitinyl-[acceptor protein]-L-lysine.. It participates in protein modification; protein ubiquitination. Its function is as follows. Functions as an E3 ubiquitin ligase. This chain is U-box domain-containing protein 21 (PUB21), found in Arabidopsis thaliana (Mouse-ear cress).